We begin with the raw amino-acid sequence, 239 residues long: Protein GrpE (239 aa).

Disordered stretches follow at residues 1 to 60 and 208 to 239; these read MIEN…SNND and SMGP…SEDV. The span at 28 to 42 shows a compositional bias: polar residues; the sequence is SMQNSTTENDELSSQ. Basic and acidic residues-rich tracts occupy residues 43–53 and 216–225; these read KTEEINTEELK and SQQEVEKDTV. The span at 226–239 shows a compositional bias: acidic residues; the sequence is EGDVDSDANTSEDV.

This sequence belongs to the GrpE family. In terms of assembly, homodimer.

It localises to the cytoplasm. Participates actively in the response to hyperosmotic and heat shock by preventing the aggregation of stress-denatured proteins, in association with DnaK and GrpE. It is the nucleotide exchange factor for DnaK and may function as a thermosensor. Unfolded proteins bind initially to DnaJ; upon interaction with the DnaJ-bound protein, DnaK hydrolyzes its bound ATP, resulting in the formation of a stable complex. GrpE releases ADP from DnaK; ATP binding to DnaK triggers the release of the substrate protein, thus completing the reaction cycle. Several rounds of ATP-dependent interactions between DnaJ, DnaK and GrpE are required for fully efficient folding. The protein is Protein GrpE of Prochlorococcus marinus (strain MIT 9301).